A 166-amino-acid chain; its full sequence is NAD(P)H-quinone oxidoreductase subunit I, chloroplastic (166 aa).

2 consecutive 4Fe-4S ferredoxin-type domains span residues 55-84 and 95-124; these read GRIH…VDWK and LNYS…MTEE. Residues Cys64, Cys67, Cys70, Cys74, Cys104, Cys107, Cys110, and Cys114 each contribute to the [4Fe-4S] cluster site.

Belongs to the complex I 23 kDa subunit family. As to quaternary structure, NDH is composed of at least 16 different subunits, 5 of which are encoded in the nucleus. Requires [4Fe-4S] cluster as cofactor.

It is found in the plastid. The protein localises to the chloroplast thylakoid membrane. It carries out the reaction a plastoquinone + NADH + (n+1) H(+)(in) = a plastoquinol + NAD(+) + n H(+)(out). It catalyses the reaction a plastoquinone + NADPH + (n+1) H(+)(in) = a plastoquinol + NADP(+) + n H(+)(out). Its function is as follows. NDH shuttles electrons from NAD(P)H:plastoquinone, via FMN and iron-sulfur (Fe-S) centers, to quinones in the photosynthetic chain and possibly in a chloroplast respiratory chain. The immediate electron acceptor for the enzyme in this species is believed to be plastoquinone. Couples the redox reaction to proton translocation, and thus conserves the redox energy in a proton gradient. This chain is NAD(P)H-quinone oxidoreductase subunit I, chloroplastic, found in Perymeniopsis ovalifolia.